The primary structure comprises 403 residues: Phosphopentomutase (403 aa).

Residues Asp-13, Asp-298, His-303, Asp-339, His-340, and His-351 each coordinate Mn(2+).

Belongs to the phosphopentomutase family. The cofactor is Mn(2+).

It localises to the cytoplasm. The catalysed reaction is 2-deoxy-alpha-D-ribose 1-phosphate = 2-deoxy-D-ribose 5-phosphate. The enzyme catalyses alpha-D-ribose 1-phosphate = D-ribose 5-phosphate. It participates in carbohydrate degradation; 2-deoxy-D-ribose 1-phosphate degradation; D-glyceraldehyde 3-phosphate and acetaldehyde from 2-deoxy-alpha-D-ribose 1-phosphate: step 1/2. Its function is as follows. Isomerase that catalyzes the conversion of deoxy-ribose 1-phosphate (dRib-1-P) and ribose 1-phosphate (Rib-1-P) to deoxy-ribose 5-phosphate (dRib-5-P) and ribose 5-phosphate (Rib-5-P), respectively. The sequence is that of Phosphopentomutase from Streptococcus equi subsp. zooepidemicus (strain H70).